The following is a 563-amino-acid chain: IQCJ-SCHIP1 readthrough transcript protein (563 aa).

In terms of domain architecture, IQ spans 47 to 67 (ESKVKIIQRAWREYLQRQEPL). Disordered stretches follow at residues 63–150 (RQEP…VSAL), 164–295 (VIDE…EPPV), 312–336 (FREQ…NERE), and 384–430 (SGSD…SLDD). Low complexity predominate over residues 76–87 (SVSSEKLSSSVS). A compositionally biased stretch (polar residues) spans 88–97 (MNTFSDSSTP). Positions 108 to 143 (SDAGSSSSSSRASSQSNSTKVTPCSECKSSSSPGGS) are enriched in low complexity. The segment covering 168–182 (WAPEEDGEEEEEEDE) has biased composition (acidic residues). 2 stretches are compositionally biased toward basic and acidic residues: residues 183 to 199 (RDQR…REPG) and 229 to 238 (HQHDPQDLRH). Serine 193 carries the phosphoserine modification. The segment covering 318-331 (RNQGQARTNSTSAQ) has biased composition (polar residues). Over residues 385 to 399 (GSDKDSDADDSKTET) the composition is skewed to basic and acidic residues. The span at 400-411 (SLDTPLSPMSKQ) shows a compositional bias: polar residues. Residues 419–563 (DTTEEESESL…KHMAEKMPAK (145 aa)) form a required for interaction with ankyrins region. A compositionally biased stretch (acidic residues) spans 420-430 (TTEEESESLDD). Positions 500-534 (IGQLQVIVNDLHSQIESLNEELVQLLLIRDELHTE) form a coiled coil.

As to quaternary structure, homooligomer (via coiled coil domain). Interacts (via IQ domain) with calmodulin; the interaction is direct and lost in presence of calcium. Interacts with ANK3 (via ANK repeats); required for localization at axon initial segments (AIS) and nodes of Ranvier. Interacts with SPTBN4. Interacts with KCNQ2 and KCNQ3. In terms of tissue distribution, highly expressed in brain and to a lower extent in heart and kidney.

It is found in the cell projection. Its subcellular location is the axon. The protein localises to the cytoplasm. In terms of biological role, may play a role in action potential conduction in myelinated cells through the organization of molecular complexes at nodes of Ranvier and axon initial segments. May also play a role in axon outgrowth and guidance. This chain is IQCJ-SCHIP1 readthrough transcript protein, found in Homo sapiens (Human).